Reading from the N-terminus, the 131-residue chain is Translation initiation factor 5A (131 aa).

K36 bears the Hypusine mark.

Belongs to the eIF-5A family.

The protein resides in the cytoplasm. Functions by promoting the formation of the first peptide bond. In Saccharolobus islandicus (strain Y.N.15.51 / Yellowstone #2) (Sulfolobus islandicus), this protein is Translation initiation factor 5A (eIF5A).